Here is a 42-residue protein sequence, read N- to C-terminus: Photosystem II reaction center protein J (42 aa).

A helical membrane pass occupies residues 10–30; sequence IPLWLIGTVVGSLAIGLLAIF.

Belongs to the PsbJ family. PSII is composed of 1 copy each of membrane proteins PsbA, PsbB, PsbC, PsbD, PsbE, PsbF, PsbH, PsbI, PsbJ, PsbK, PsbL, PsbM, PsbT, PsbX, PsbY, PsbZ, Psb30/Ycf12, at least 3 peripheral proteins of the oxygen-evolving complex and a large number of cofactors. It forms dimeric complexes.

The protein localises to the plastid. It localises to the chloroplast thylakoid membrane. One of the components of the core complex of photosystem II (PSII). PSII is a light-driven water:plastoquinone oxidoreductase that uses light energy to abstract electrons from H(2)O, generating O(2) and a proton gradient subsequently used for ATP formation. It consists of a core antenna complex that captures photons, and an electron transfer chain that converts photonic excitation into a charge separation. This chain is Photosystem II reaction center protein J, found in Stigeoclonium helveticum (Green alga).